Consider the following 315-residue polypeptide: Leukocidin-S subunit (315 aa).

The signal sequence occupies residues 1–29; that stretch reads MLKNKILATTLSVSLLAPLANPLLENAKA.

The protein belongs to the aerolysin family. In terms of assembly, leukocidin consists of two protein components: F and S.

Leukocidin causes cytotoxic changes in polymorphonuclear leukocytes. The chain is Leukocidin-S subunit (lukS) from Staphylococcus aureus.